Reading from the N-terminus, the 109-residue chain is MEVKAIHRGARISAQKTRLVADQIRGLPVDKALNVLTFSPKKAAGIVKKVVLSAIANAEHNEGADIDELKITSIYIDKAASLKRFTARAKGRGNRIEKQSCHITVTVGN.

It belongs to the universal ribosomal protein uL22 family. In terms of assembly, part of the 50S ribosomal subunit.

This protein binds specifically to 23S rRNA; its binding is stimulated by other ribosomal proteins, e.g. L4, L17, and L20. It is important during the early stages of 50S assembly. It makes multiple contacts with different domains of the 23S rRNA in the assembled 50S subunit and ribosome. Its function is as follows. The globular domain of the protein is located near the polypeptide exit tunnel on the outside of the subunit, while an extended beta-hairpin is found that lines the wall of the exit tunnel in the center of the 70S ribosome. In Paraburkholderia xenovorans (strain LB400), this protein is Large ribosomal subunit protein uL22.